Here is a 194-residue protein sequence, read N- to C-terminus: MRLILLGPPGAGKGTQAQILVEKLHIPQLSTGDMLRAAVKAETEIGKKAKAVMDAGELVSDAIVNAIVAERIDQPDCANGFILDGYPRTLAQADAVEAMLGERGLKLDAVIELVVDDKALVGRIMKRAEDAQAAGQPVRRDDNPEVFEERLREYYKKTAPLVGYYYAKGLLKGVDGMASIDEVTRQIEGILAKA.

Gly10–Thr15 lines the ATP pocket. The NMP stretch occupies residues Ser30–Val59. Residues Thr31, Arg36, Glu57–Val59, Gly85–Arg88, and Gln92 contribute to the AMP site. Residues Lys126–Asp142 are LID. Arg127 lines the ATP pocket. Positions 139 and 150 each coordinate AMP. Position 178 (Ala178) interacts with ATP.

Belongs to the adenylate kinase family. Monomer.

The protein localises to the cytoplasm. The catalysed reaction is AMP + ATP = 2 ADP. It functions in the pathway purine metabolism; AMP biosynthesis via salvage pathway; AMP from ADP: step 1/1. Functionally, catalyzes the reversible transfer of the terminal phosphate group between ATP and AMP. Plays an important role in cellular energy homeostasis and in adenine nucleotide metabolism. In Chelativorans sp. (strain BNC1), this protein is Adenylate kinase.